A 762-amino-acid polypeptide reads, in one-letter code: Alpha-xylosidase XylQ (762 aa).

The Nucleophile role is filled by aspartate 414. Glutamate 417 is an active-site residue.

This sequence belongs to the glycosyl hydrolase 31 family.

The protein localises to the cell membrane. It catalyses the reaction Hydrolysis of terminal, non-reducing alpha-D-xylose residues with release of alpha-D-xylose.. Its function is as follows. Involved in the metabolism of isoprimeverose. Hydrolyzes isoprimeverose into equimolar amounts of glucose and xylose. In vitro, can also use p-nitrophenyl-alpha-D-xylopyranoside (alpha-p-NPX). The polypeptide is Alpha-xylosidase XylQ (Lactiplantibacillus pentosus (Lactobacillus pentosus)).